Here is a 91-residue protein sequence, read N- to C-terminus: M-myrmeciitoxin-Mb3a (91 aa).

The N-terminal stretch at Met1–Ser21 is a signal peptide. Positions Pro22 to Ala54 are excised as a propeptide.

In terms of assembly, homodimer; disulfide-linked. In terms of tissue distribution, expressed by the venom gland and reservoir.

It is found in the secreted. Causes a significant and dose-dependent histamine release, probably by influencing the signal transduction of mast cells through a non-IgE-mediated pathway. This peptide does not have cytotoxic activities. The protein is M-myrmeciitoxin-Mb3a of Myrmecia banksi (Jack jumper ant).